Consider the following 314-residue polypeptide: CD-NTase-associated protein 12 (314 aa).

The region spanning 5–129 (RIFIGSSSEE…VKGISLARFK (125 aa)) is the TIR domain. Residues 160 to 314 (SSTLAAVYYE…DLIKIVDEDN (155 aa)) are STING domain. F171, P234, and D252 together coordinate 3',3'-c-di-GMP.

This sequence in the C-terminal section; belongs to the bacterial STING family. In terms of assembly, homodimer. Forms homodimers; in the presence of c-di-GMP forms filaments with an ordered array of parallel-stacked subunits.

It catalyses the reaction NAD(+) + H2O = ADP-D-ribose + nicotinamide + H(+). With respect to regulation, NAD(+) hydrolase activity is strongly stimulated by c-di-GMP, weakly by 3'3'-cGAMP, very weakly by c-di-AMP but not at all by 2'3'-cGAMP. Self-association of TIR domains is required for NADase activity. Its function is as follows. Effector protein of a CBASS antiviral system with NAD(+) hydrolase activity. CBASS (cyclic oligonucleotide-based antiphage signaling system) provides immunity against bacteriophage. The CD-NTase protein synthesizes cyclic nucleotides in response to infection; these serve as specific second messenger signals. The signals activate a diverse range of effectors, leading to bacterial cell death and thus abortive phage infection. A type I-(GG) CBASS system. Binds c-di-GMP (synthesized by the cognate CdnE encoded upstream in the same operon), and about 10-fold less well 3'3'-cGAMP, but not c-di-AMP, 2'-3'-cGAMP or cUMP-AMP (tested without the N-terminal TIR domain). Upon activation by c-di-GMP forms filaments which hydrolyze NAD(+); filament formation is required for enzyme activation. This Capnocytophaga granulosa (strain ATCC 51502 / DSM 11449 / JCM 8566 / LMG 16022 / NCTC 12948 / B0611) protein is CD-NTase-associated protein 12.